A 296-amino-acid polypeptide reads, in one-letter code: Acetyl-coenzyme A carboxylase carboxyl transferase subunit beta (296 aa).

The CoA carboxyltransferase N-terminal domain maps to 26-295; the sequence is VWTKCTNCEQ…PFKVGELIIE (270 aa). Zn(2+) contacts are provided by Cys-30, Cys-33, Cys-49, and Cys-52. Residues 30–52 form a C4-type zinc finger; that stretch reads CTNCEQVLYSEELKRNMQVCPKC.

It belongs to the AccD/PCCB family. As to quaternary structure, acetyl-CoA carboxylase is a heterohexamer composed of biotin carboxyl carrier protein (AccB), biotin carboxylase (AccC) and two subunits each of ACCase subunit alpha (AccA) and ACCase subunit beta (AccD). The cofactor is Zn(2+).

It localises to the cytoplasm. It carries out the reaction N(6)-carboxybiotinyl-L-lysyl-[protein] + acetyl-CoA = N(6)-biotinyl-L-lysyl-[protein] + malonyl-CoA. Its pathway is lipid metabolism; malonyl-CoA biosynthesis; malonyl-CoA from acetyl-CoA: step 1/1. Its function is as follows. Component of the acetyl coenzyme A carboxylase (ACC) complex. Biotin carboxylase (BC) catalyzes the carboxylation of biotin on its carrier protein (BCCP) and then the CO(2) group is transferred by the transcarboxylase to acetyl-CoA to form malonyl-CoA. This chain is Acetyl-coenzyme A carboxylase carboxyl transferase subunit beta, found in Haemophilus ducreyi (strain 35000HP / ATCC 700724).